Consider the following 201-residue polypeptide: GTP cyclohydrolase 1 (201 aa).

The disordered stretch occupies residues 1–20; the sequence is MDATVKKMSPETSRPSREEA. 3 residues coordinate Zn(2+): Cys91, His94, and Cys162.

This sequence belongs to the GTP cyclohydrolase I family. In terms of assembly, homomer.

It catalyses the reaction GTP + H2O = 7,8-dihydroneopterin 3'-triphosphate + formate + H(+). The protein operates within cofactor biosynthesis; 7,8-dihydroneopterin triphosphate biosynthesis; 7,8-dihydroneopterin triphosphate from GTP: step 1/1. In Allorhizobium ampelinum (strain ATCC BAA-846 / DSM 112012 / S4) (Agrobacterium vitis (strain S4)), this protein is GTP cyclohydrolase 1.